A 578-amino-acid chain; its full sequence is Endonuclease GajA (578 aa).

The interval 1–341 (MKFSNITIKN…RLIRVHSTEK (341 aa)) is ATPase domain. Position 32-36 (32-36 (DIGKT)) interacts with ATP. The tract at residues 370–510 (LFAERVLLIE…LGERIYLSEI (141 aa)) is toprim domain. A divalent metal cation is bound by residues E379, E383, D463, E464, and E513.

In terms of assembly, homotetramer. Forms the core of the anti-phage defense complex. Interacts with GajB; 2 GajB dimers dock at opposite sides of the GajA complex to form a 4:4 GajA-GajB assembly (GajAB). GajAB interacts with Bacillus phage Phi3T Gad1 protein; this interaction forms a 4:4:8 GajAB-Gad1 complex and leads to GajAB inhibition. Mg(2+) is required as a cofactor. The cofactor is Mn(2+).

With respect to regulation, endonuclease activity inhibited by all NTPs, dNTPs, NDPs (at 0.5 mM, UDP not tested) and AMP-PNP; not inhibited by any tested NMP, dNMP or nucleoside. Inhibited by 100 mM NaCl, 100 mM KCl, 0.5 mM Co(2+) and 0.5 mM Ni(2+). Component of antiviral defense system Gabija type I, composed of GajA and GajB. Endonuclease that nicks double-stranded DNA within the sequence 5'-TNNNCGGGNNA-3' in the absence of nucleotides (NTP, dNTP and NDPs), cleaving after C-1. Has no detected ATPase activity. Expression of Gabija type I in B.subtilis (strain BEST7003) confers resistance to phages phi105, phi29, rho14, SpBeta and SBSphiC. Expression of Gabija type I in E.coli B (strain ATCC 11303) confers resistance to phage T7. It is thought that this enzyme is strongly suppressed during physiological growth (in E.coli total nucleotide concentration is over 8.7 mM in mid-log phase), but during viral replication, when nucleotides are rapidly consumed, it is de-suppressed and degrades target DNA. This Bacillus cereus (strain VD045) protein is Endonuclease GajA.